Here is a 273-residue protein sequence, read N- to C-terminus: Putative phosphoenolpyruvate synthase regulatory protein (273 aa).

153–160 (GVSRSGKT) contributes to the ADP binding site.

The protein belongs to the pyruvate, phosphate/water dikinase regulatory protein family. PSRP subfamily.

The catalysed reaction is [pyruvate, water dikinase] + ADP = [pyruvate, water dikinase]-phosphate + AMP + H(+). It catalyses the reaction [pyruvate, water dikinase]-phosphate + phosphate + H(+) = [pyruvate, water dikinase] + diphosphate. Its function is as follows. Bifunctional serine/threonine kinase and phosphorylase involved in the regulation of the phosphoenolpyruvate synthase (PEPS) by catalyzing its phosphorylation/dephosphorylation. The chain is Putative phosphoenolpyruvate synthase regulatory protein from Verminephrobacter eiseniae (strain EF01-2).